The chain runs to 60 residues: MPKIEVKDGDLELALRKFKRVASETKRSFLKHEYHLRKGVKRREKEKAARKRLQKKHRMY.

The disordered stretch occupies residues 38–60; sequence KGVKRREKEKAARKRLQKKHRMY.

The protein belongs to the bacterial ribosomal protein bS21 family.

The sequence is that of Small ribosomal subunit protein bS21 from Mycoplasmoides gallisepticum (strain R(low / passage 15 / clone 2)) (Mycoplasma gallisepticum).